A 459-amino-acid polypeptide reads, in one-letter code: MNRLPSSASALACSAHALNLIEKRTLDHEEMKALNREVIEYFKEHVNPGFLEYRKSVTAGGDYGAVEWQAGGLNTLVDTQGQEFIDCLGGFGIFNVGHRNPVVVSAVQNQLAKQPLHSQELLDPLRAMLAKTVAALTPGKLKYSFFCNSGTESVEAALKLAKAYQSPRGKFTFIATSGAFHGKSLGALSATAKSTFRKPFMPLLPGFRHVPFGNIEAMRTALNECKKTGDDVAAVILEPIQGEGGVILPPPGYLTAVRKLCDEFGALMILDEVQTGMGRTGKMFACEHENVQPDILCLAKALGGGVMPIGATIATEEVFSVLFDNPFLHTTTFGGNPLACAAALATINVLLEQNLPAQAEQKGDMLLDGFRQLAREYPDLVQEARGKGMLMAIEFVDNEIGYNFASEMFRQRVLVAGTLNNAKTIRIEPPLTLTIEQCELVIKAAHKALAAMRVSVEEA.

Residues 150 to 151 and Q274 each bind pyridoxal 5'-phosphate; that span reads GT. Position 300 is an N6-(pyridoxal phosphate)lysine (K300). T332 lines the pyridoxal 5'-phosphate pocket.

Belongs to the class-III pyridoxal-phosphate-dependent aminotransferase family. Putrescine aminotransferase subfamily. Pyridoxal 5'-phosphate is required as a cofactor.

The enzyme catalyses an alkane-alpha,omega-diamine + 2-oxoglutarate = an omega-aminoaldehyde + L-glutamate. It carries out the reaction putrescine + 2-oxoglutarate = 1-pyrroline + L-glutamate + H2O. The catalysed reaction is cadaverine + 2-oxoglutarate = 5-aminopentanal + L-glutamate. The protein operates within amine and polyamine degradation; putrescine degradation; 4-aminobutanal from putrescine (transaminase route): step 1/1. Functionally, catalyzes the aminotransferase reaction from putrescine to 2-oxoglutarate, leading to glutamate and 4-aminobutanal, which spontaneously cyclizes to form 1-pyrroline. This is the first step in one of two pathways for putrescine degradation, where putrescine is converted into 4-aminobutanoate (gamma-aminobutyrate or GABA) via 4-aminobutanal. Also functions as a cadaverine transaminase in a a L-lysine degradation pathway to succinate that proceeds via cadaverine, glutarate and L-2-hydroxyglutarate. The sequence is that of Putrescine aminotransferase from Escherichia coli O8 (strain IAI1).